The sequence spans 1026 residues: Chromodomain-helicase-DNA-binding protein 1-like (1026 aa).

Positions 47–212 (SLCMKNQQGC…YSLLTFIQPS (166 aa)) constitute a Helicase ATP-binding domain. 60–67 (DEMGLGKT) is an ATP binding site. Residues 163-166 (DEAH) carry the DEAH box motif. In terms of domain architecture, Helicase C-terminal spans 340–494 (LLDSMLAYLQ…EGRFSLLDQA (155 aa)). The stretch at 540–668 (LTDEEHAKLN…EELNYKKKMA (129 aa)) forms a coiled coil. Residues 594–628 (AEMEDAEKEGRALRNKAGVSLSGPLINPARKKRPL) are regulatory linker segment (RLS). The tract at residues 606–655 (LRNKAGVSLSGPLINPARKKRPLTEAELEERRQKRQAAAAKRAKLQEERK) is disordered. Residues 608–666 (NKAGVSLSGPLINPARKKRPLTEAELEERRQKRQAAAAKRAKLQEERKKQQEELNYKKK) form a required for ATPase activity region. In terms of domain architecture, Macro spans 697-870 (HVSFSSTDSD…IFTSIYYYRR (174 aa)). Residues 877-907 (VSSTASTTTPSSSKPAASSPSESPHSSSPPA) are compositionally biased toward low complexity. A disordered region spans residues 877 to 929 (VSSTASTTTPSSSKPAASSPSESPHSSSPPANREGLTKSAELSTTSHEGPGAP). The BRCT domain occupies 930–1023 (GLADFMRGVH…RKVSVSKYVI (94 aa)).

This sequence belongs to the SNF2/RAD54 helicase family. In terms of assembly, interacts with nucleosomes; interacts with the acidic patch of histones.

Its subcellular location is the nucleus. It is found in the chromosome. The enzyme catalyses ATP + H2O = ADP + phosphate + H(+). Its activity is regulated as follows. Adopts an inactive conformation in absence of DNA damage. Binding to poly-ADP-ribosylated histones activates the ATP-dependent chromatin remodeler activity. In terms of biological role, ATP-dependent chromatin remodeler that mediates chromatin-remodeling following DNA damage. Recruited to DNA damage sites through interaction with poly-ADP-ribose: specifically recognizes and binds histones that are poly-ADP-ribosylated on serine residues in response to DNA damage. Poly-ADP-ribose-binding activates the ATP-dependent chromatin remodeler activity, thereby regulating chromatin during DNA repair. Catalyzes nucleosome sliding away from DNA breaks in an ATP-dependent manner. This is Chromodomain-helicase-DNA-binding protein 1-like (chd1l) from Danio rerio (Zebrafish).